Reading from the N-terminus, the 273-residue chain is MTVRKNQATLTADEKRRFVTAVLSSSAARYDTFVTTHNEFIVADTDNGERTGHRSPSFLPWHRRFLLEFERALQSVDASVALPYWDWSTDRSARSSLWAPDFLGGTGRSRNGRVTDGPFRAATGVWPITVRLDGRTYLRRALGGAGRELPTRAEVDSVLSIPTYDMAPWNSASDGFRNHLEGWRGVNLHNRVHVWVGGQMATGVSPNDPVFWLHHAYIDKLWAQWQRRHRTPAYVPAAGTPDVVDLDETMKPWHDSSPADLLDHTGHYTFDTD.

Residues histidine 37, histidine 53, histidine 62, histidine 189, histidine 193, and histidine 215 each contribute to the Cu cation site.

It belongs to the tyrosinase family. Cu(2+) serves as cofactor.

It catalyses the reaction 2 L-dopa + O2 = 2 L-dopaquinone + 2 H2O. It carries out the reaction L-tyrosine + O2 = L-dopaquinone + H2O. Functionally, this is a copper-containing oxidase that functions in the formation of pigments such as melanins and other polyphenolic compounds. The protein is Tyrosinase (melC2) of Streptomyces lincolnensis.